The sequence spans 259 residues: MNLLAKTRKLNTMLQQEASTHVDFKVMADRLSEVMESNTFIVSRRGKLLGIAIKQQIENARIRGFLEERQFPEDYTKKLFNVTETTANIAIDSEHTAFPIDNRDMFETSKTTIVPIIGGGERLGTLVLGRMLEDFNEEDLVLAEYGATVVGMEILREKAHEAEDKARKKAVVQMAINSLSYSELEAIEHIFEELDGNEGLLVASKIADRVGITRSVIVNALRKLESAGVIESRSLGMKGTYIKILNDNFLYELERIKSN.

The GAF domain stretch occupies residues 1–155; it reads MNLLAKTRKL…GATVVGMEIL (155 aa). Positions 203–222 form a DNA-binding region, H-T-H motif; it reads ASKIADRVGITRSVIVNALR.

It belongs to the CodY family.

The protein resides in the cytoplasm. DNA-binding global transcriptional regulator which is involved in the adaptive response to starvation and acts by directly or indirectly controlling the expression of numerous genes in response to nutrient availability. During rapid exponential growth, CodY is highly active and represses genes whose products allow adaptation to nutrient depletion. The sequence is that of Global transcriptional regulator CodY from Exiguobacterium sibiricum (strain DSM 17290 / CCUG 55495 / CIP 109462 / JCM 13490 / 255-15).